The following is a 216-amino-acid chain: Kynurenine formamidase (216 aa).

Tryptophan 24 contributes to the substrate binding site. Zn(2+) contacts are provided by histidine 54, histidine 58, and aspartate 60. Histidine 64 functions as the Proton donor/acceptor in the catalytic mechanism. Residues histidine 164 and glutamate 176 each coordinate Zn(2+).

It belongs to the Cyclase 1 superfamily. KynB family. Homodimer. It depends on Zn(2+) as a cofactor.

It carries out the reaction N-formyl-L-kynurenine + H2O = L-kynurenine + formate + H(+). It functions in the pathway amino-acid degradation; L-tryptophan degradation via kynurenine pathway; L-kynurenine from L-tryptophan: step 2/2. Its function is as follows. Catalyzes the hydrolysis of N-formyl-L-kynurenine to L-kynurenine, the second step in the kynurenine pathway of tryptophan degradation. In Erythrobacter litoralis (strain HTCC2594), this protein is Kynurenine formamidase.